We begin with the raw amino-acid sequence, 265 residues long: 3-methyl-2-oxobutanoate hydroxymethyltransferase (265 aa).

Mg(2+) contacts are provided by Asp44 and Asp83. 3-methyl-2-oxobutanoate-binding positions include 44 to 45 (DS), Asp83, and Lys113. Glu115 lines the Mg(2+) pocket. Glu183 functions as the Proton acceptor in the catalytic mechanism.

This sequence belongs to the PanB family. As to quaternary structure, homodecamer; pentamer of dimers. Requires Mg(2+) as cofactor.

Its subcellular location is the cytoplasm. It catalyses the reaction 3-methyl-2-oxobutanoate + (6R)-5,10-methylene-5,6,7,8-tetrahydrofolate + H2O = 2-dehydropantoate + (6S)-5,6,7,8-tetrahydrofolate. Its pathway is cofactor biosynthesis; (R)-pantothenate biosynthesis; (R)-pantoate from 3-methyl-2-oxobutanoate: step 1/2. In terms of biological role, catalyzes the reversible reaction in which hydroxymethyl group from 5,10-methylenetetrahydrofolate is transferred onto alpha-ketoisovalerate to form ketopantoate. This Leptospira borgpetersenii serovar Hardjo-bovis (strain JB197) protein is 3-methyl-2-oxobutanoate hydroxymethyltransferase.